Reading from the N-terminus, the 420-residue chain is UDP-N-acetylglucosamine 1-carboxyvinyltransferase (420 aa).

Residue 22 to 23 participates in phosphoenolpyruvate binding; that stretch reads KN. UDP-N-acetyl-alpha-D-glucosamine is bound at residue R94. C118 acts as the Proton donor in catalysis. C118 is subject to 2-(S-cysteinyl)pyruvic acid O-phosphothioketal. Positions 307 and 329 each coordinate UDP-N-acetyl-alpha-D-glucosamine.

This sequence belongs to the EPSP synthase family. MurA subfamily.

Its subcellular location is the cytoplasm. It catalyses the reaction phosphoenolpyruvate + UDP-N-acetyl-alpha-D-glucosamine = UDP-N-acetyl-3-O-(1-carboxyvinyl)-alpha-D-glucosamine + phosphate. Its pathway is cell wall biogenesis; peptidoglycan biosynthesis. Functionally, cell wall formation. Adds enolpyruvyl to UDP-N-acetylglucosamine. This is UDP-N-acetylglucosamine 1-carboxyvinyltransferase from Gluconacetobacter diazotrophicus (strain ATCC 49037 / DSM 5601 / CCUG 37298 / CIP 103539 / LMG 7603 / PAl5).